Here is a 506-residue protein sequence, read N- to C-terminus: ESX-5 secretion system ATPase EccB5 (506 aa).

A helical membrane pass occupies residues 56–76 (VVASVSAALVICLGALLWSFI).

Belongs to the EccB family. Part of the ESX-5 / type VII secretion system (T7SS), which is composed of cytosolic and membrane components. The ESX-5 membrane complex is composed of EccB5, EccC5, EccD5 and EccE5.

Its subcellular location is the cell inner membrane. Functionally, an ATPase. Part of the ESX-5 specialized secretion system, which is responsible for the secretion of EsxN and a number of PE_PGRS and PPE proteins, including PPE41. In Mycobacterium tuberculosis (strain CDC 1551 / Oshkosh), this protein is ESX-5 secretion system ATPase EccB5.